A 399-amino-acid chain; its full sequence is Subtilisin-like protease 4 (399 aa).

The first 19 residues, 1–19, serve as a signal peptide directing secretion; that stretch reads MVCLKTLSVFLAAFAAADA. The propeptide occupies 20-118; that stretch reads RAVFKTQGHK…VEQDQVVRIS (99 aa). An Inhibitor I9 domain is found at 38–117; that stretch reads YIVVMKDGVS…YVEQDQVVRI (80 aa). Positions 128–399 constitute a Peptidase S8 domain; the sequence is SWGLGRVSHR…NRLLYNGSGQ (272 aa). Catalysis depends on charge relay system residues Asp-160 and His-191. N-linked (GlcNAc...) asparagine glycans are attached at residues Asn-252 and Asn-308. Ser-346 acts as the Charge relay system in catalysis. Asn-395 carries an N-linked (GlcNAc...) asparagine glycan.

Belongs to the peptidase S8 family.

It localises to the secreted. Its function is as follows. Secreted subtilisin-like serine protease with keratinolytic activity that contributes to pathogenicity. The polypeptide is Subtilisin-like protease 4 (SUB4) (Arthroderma benhamiae (strain ATCC MYA-4681 / CBS 112371) (Trichophyton mentagrophytes)).